We begin with the raw amino-acid sequence, 210 residues long: Glutathione S-transferase P (210 aa).

Residues 2–81 enclose the GST N-terminal domain; it reads PPYTIVYFPV…HLGRTLGLYG (80 aa). The residue at position 4 (Tyr-4) is a Phosphotyrosine; by EGFR. Glutathione contacts are provided by residues Tyr-8, Arg-14, Trp-39, Lys-45, and 52 to 53; that span reads QL. Position 62 is a phosphothreonine (Thr-62). 65 to 66 is a glutathione binding site; it reads QS. The region spanning 83 to 204 is the GST C-terminal domain; sequence DQQEAALVDM…ASPEHMNRPI (122 aa). Lys-103 and Lys-116 each carry N6-succinyllysine. Lys-128 carries the post-translational modification N6-acetyllysine.

The protein belongs to the GST superfamily. Pi family. In terms of assembly, homodimer. Interacts with CDK5.

The protein localises to the cytoplasm. The protein resides in the mitochondrion. It localises to the nucleus. It carries out the reaction RX + glutathione = an S-substituted glutathione + a halide anion + H(+). The catalysed reaction is prostaglandin J2 + glutathione = prostaglandin J2-S-(R)-glutathione. The enzyme catalyses prostaglandin J2 + glutathione = prostaglandin J2-S-(S)-glutathione. It catalyses the reaction prostaglandin A2 + glutathione = prostaglandin A2-S-(S)-glutathione. It carries out the reaction 11(S)-hydroxy-14(S),15(S)-epoxy-(5Z,8Z,12E)-eicosatrienoate + glutathione = (11S,15S)-dihydroxy-14(R)-S-glutathionyl-(5Z,8Z,12E)-eicosatrienoate. Functionally, conjugation of reduced glutathione to a wide number of exogenous and endogenous hydrophobic electrophiles. Involved in the formation of glutathione conjugates of both prostaglandin A2 (PGA2) and prostaglandin J2 (PGJ2). Participates in the formation of novel hepoxilin regioisomers. Negatively regulates CDK5 activity via p25/p35 translocation to prevent neurodegeneration. This chain is Glutathione S-transferase P (GSTP1), found in Bos taurus (Bovine).